A 213-amino-acid polypeptide reads, in one-letter code: 3-oxoadipate CoA-transferase subunit B (213 aa).

The active site involves E50.

This sequence belongs to the 3-oxoacid CoA-transferase subunit B family. As to quaternary structure, heterodimer.

The catalysed reaction is 3-oxoadipate + succinyl-CoA = 3-oxoadipyl-CoA + succinate. It functions in the pathway aromatic compound metabolism; beta-ketoadipate pathway; acetyl-CoA and succinyl-CoA from 3-oxoadipate: step 1/2. The protein is 3-oxoadipate CoA-transferase subunit B (pcaJ) of Pseudomonas putida (strain ATCC 47054 / DSM 6125 / CFBP 8728 / NCIMB 11950 / KT2440).